The primary structure comprises 188 residues: MALTFALLVALLVLSCKSSCSVGCDLPQTHSLGSRRTLMLLAQMRRISLFSCLKDRHDFGFPQEEFGNQFQKAETIPVLHEMIQQIFNLFSTKDSSAAWDETLLDKFYTELYQQLNDLEACVIQGVGVTETPLMKEDSILAVRKYFQRITLYLKEKKYSPCAWEVVRAEIMRSFSLSTNLQESLRSKE.

The signal sequence occupies residues 1 to 23 (MALTFALLVALLVLSCKSSCSVG). Intrachain disulfides connect Cys-24–Cys-121 and Cys-52–Cys-161. Residue Thr-129 is glycosylated (O-linked (GalNAc...) threonine).

Belongs to the alpha/beta interferon family. Interacts with IFNAR2.

It localises to the secreted. Its function is as follows. Produced by macrophages, IFN-alpha have antiviral activities. The chain is Interferon alpha-2 (IFNA2) from Homo sapiens (Human).